The following is a 232-amino-acid chain: MAKKGKKYVEAAKLVDRTKAYDVNEAIELVKKTNTAKFDATVEAAFRLGVDPRKNDQQIRGAVVLPNGTGKTQRVLVFAKGEKAKEAEAAGADYVGDADYINKIQQGWFDFDVIVATPDMMGEVGKIGRVLGPKGLMPNPKTGTVTFEVEKAVNEIKAGKVEYRVDKAGNIHVPIGKVSFEEGKLVENFATMYDTILKAKPAAAKGVYVKNVSVTSTMGPGIKVDPSTFNVK.

This sequence belongs to the universal ribosomal protein uL1 family. Part of the 50S ribosomal subunit.

Functionally, binds directly to 23S rRNA. The L1 stalk is quite mobile in the ribosome, and is involved in E site tRNA release. Protein L1 is also a translational repressor protein, it controls the translation of the L11 operon by binding to its mRNA. This chain is Large ribosomal subunit protein uL1, found in Bacillus licheniformis (strain ATCC 14580 / DSM 13 / JCM 2505 / CCUG 7422 / NBRC 12200 / NCIMB 9375 / NCTC 10341 / NRRL NRS-1264 / Gibson 46).